We begin with the raw amino-acid sequence, 276 residues long: Large ribosomal subunit protein uL2 (276 aa).

Residues 221-276 (RGSAMNPNDHPHGGGEGRAPIGRKSPMTPWGKKARGVKTRDRKKASNALIIRRRTK) form a disordered region. Residues 252 to 276 (KKARGVKTRDRKKASNALIIRRRTK) show a composition bias toward basic residues.

The protein belongs to the universal ribosomal protein uL2 family. In terms of assembly, part of the 50S ribosomal subunit. Forms a bridge to the 30S subunit in the 70S ribosome.

Its function is as follows. One of the primary rRNA binding proteins. Required for association of the 30S and 50S subunits to form the 70S ribosome, for tRNA binding and peptide bond formation. It has been suggested to have peptidyltransferase activity; this is somewhat controversial. Makes several contacts with the 16S rRNA in the 70S ribosome. This Onion yellows phytoplasma (strain OY-M) protein is Large ribosomal subunit protein uL2.